Reading from the N-terminus, the 356-residue chain is Butyrate kinase (356 aa).

It belongs to the acetokinase family.

The protein localises to the cytoplasm. It catalyses the reaction butanoate + ATP = butanoyl phosphate + ADP. It participates in lipid metabolism; butanoate metabolism. In terms of biological role, catalyzes the conversion of butyryl-CoA through butyryl phosphate to butyrate. The polypeptide is Butyrate kinase (buk) (Clostridium perfringens (strain 13 / Type A)).